Reading from the N-terminus, the 576-residue chain is RING finger and SPRY domain-containing protein 1 (576 aa).

The signal sequence occupies residues 1-16 (MIVFGWAVFLASRSLG). Ser50 carries the post-translational modification Phosphoserine. The interval 50-99 (SGTDDSVDTQQQQAENSAVPTADTRSQPRDPVRPPRRGRGPHEPRRKKQN) is disordered. Positions 57 to 68 (DTQQQQAENSAV) are enriched in polar residues. The span at 83 to 97 (PPRRGRGPHEPRRKK) shows a compositional bias: basic residues. In terms of domain architecture, B30.2/SPRY spans 300-483 (LFLKEGRQLT…CEFNFGAKPF (184 aa)). N-linked (GlcNAc...) asparagine glycosylation occurs at Asn314. The segment at 527–562 (CSLCCDEVADTQLKPCGHSDLCMDCALQLETCPLCR) adopts an RING-type zinc-finger fold.

It localises to the secreted. This is RING finger and SPRY domain-containing protein 1 (RSPRY1) from Homo sapiens (Human).